Consider the following 437-residue polypeptide: GTPase Obg (437 aa).

The Obg domain maps to 2 to 160 (SMFLDTAKIS…RQLELELKIL (159 aa)). Positions 161–338 (ADVGLVGFPS…LLEATAELLA (178 aa)) constitute an OBG-type G domain. GTP contacts are provided by residues 167–174 (GFPSVGKS), 192–196 (FTTIV), 214–217 (DLPG), 284–287 (NKMD), and 319–321 (SSL). Residues Ser174 and Thr194 each contribute to the Mg(2+) site. The OCT domain occupies 359–437 (GFAETEKNFE…IGKFEFEFVD (79 aa)).

It belongs to the TRAFAC class OBG-HflX-like GTPase superfamily. OBG GTPase family. As to quaternary structure, monomer. Requires Mg(2+) as cofactor.

Its subcellular location is the cytoplasm. In terms of biological role, an essential GTPase which binds GTP, GDP and possibly (p)ppGpp with moderate affinity, with high nucleotide exchange rates and a fairly low GTP hydrolysis rate. Plays a role in control of the cell cycle, stress response, ribosome biogenesis and in those bacteria that undergo differentiation, in morphogenesis control. This Streptococcus pyogenes serotype M49 (strain NZ131) protein is GTPase Obg.